The chain runs to 337 residues: Glutaredoxin-3 (337 aa).

Ala-2 is subject to N-acetylalanine. Residues 2 to 119 (AAGAAEAGEA…LTKKVQRHVS (118 aa)) enclose the Thioredoxin domain. A Phosphoserine modification is found at Ser-119. 2 consecutive Glutaredoxin domains span residues 144 to 238 (HAAP…PKLE) and 239 to 337 (ERLK…KGEN). The [2Fe-2S] cluster site is built by Cys-161 and Cys-263.

Homodimer; the homodimer is independent of 2Fe-2S clusters. Heterotrimer; forms a heterotrimeric complex composed by two BOLA2 molecules and one GLRX3 molecule; linked by [2Fe-2S] clusters. Interacts (via N-terminus) with PRKCQ/PKC-theta. Interacts (via C-terminus) with CSRP3. Interacts with CSRP2.

It is found in the cytoplasm. Its subcellular location is the cytosol. The protein localises to the cell cortex. It localises to the myofibril. The protein resides in the sarcomere. It is found in the z line. Functionally, together with BOLA2, acts as a cytosolic iron-sulfur (Fe-S) cluster assembly factor that facilitates [2Fe-2S] cluster insertion into a subset of cytosolic proteins. Acts as a critical negative regulator of cardiac hypertrophy and a positive inotropic regulator. Required for hemoglobin maturation. Does not possess any thyoredoxin activity since it lacks the conserved motif that is essential for catalytic activity. This is Glutaredoxin-3 (Glrx3) from Mus musculus (Mouse).